A 91-amino-acid polypeptide reads, in one-letter code: Small ribosomal subunit protein uS19 (91 aa).

This sequence belongs to the universal ribosomal protein uS19 family.

In terms of biological role, protein S19 forms a complex with S13 that binds strongly to the 16S ribosomal RNA. This is Small ribosomal subunit protein uS19 from Desulfotalea psychrophila (strain LSv54 / DSM 12343).